A 309-amino-acid polypeptide reads, in one-letter code: Homoserine O-succinyltransferase (309 aa).

Residue cysteine 142 is the Acyl-thioester intermediate of the active site. 2 residues coordinate substrate: lysine 163 and serine 192. The active-site Proton acceptor is histidine 235. Glutamate 237 is an active-site residue. A substrate-binding site is contributed by arginine 249.

Belongs to the MetA family.

The protein localises to the cytoplasm. It carries out the reaction L-homoserine + succinyl-CoA = O-succinyl-L-homoserine + CoA. It functions in the pathway amino-acid biosynthesis; L-methionine biosynthesis via de novo pathway; O-succinyl-L-homoserine from L-homoserine: step 1/1. Transfers a succinyl group from succinyl-CoA to L-homoserine, forming succinyl-L-homoserine. The protein is Homoserine O-succinyltransferase of Photorhabdus laumondii subsp. laumondii (strain DSM 15139 / CIP 105565 / TT01) (Photorhabdus luminescens subsp. laumondii).